We begin with the raw amino-acid sequence, 461 residues long: Fumarate hydratase class II (461 aa).

Substrate contacts are provided by residues 97–99, arginine 125, 128–131, 138–140, and threonine 186; these read SGT, HPND, and SSN. Residue histidine 187 is the Proton donor/acceptor of the active site. Serine 317 is an active-site residue. Substrate-binding positions include serine 318 and 323–325; that span reads KVN.

Belongs to the class-II fumarase/aspartase family. Fumarase subfamily. Homotetramer.

It localises to the cytoplasm. The enzyme catalyses (S)-malate = fumarate + H2O. The protein operates within carbohydrate metabolism; tricarboxylic acid cycle; (S)-malate from fumarate: step 1/1. Functionally, involved in the TCA cycle. Catalyzes the stereospecific interconversion of fumarate to L-malate. The chain is Fumarate hydratase class II from Ralstonia nicotianae (strain ATCC BAA-1114 / GMI1000) (Ralstonia solanacearum).